A 241-amino-acid chain; its full sequence is Demethylmenaquinone methyltransferase (241 aa).

S-adenosyl-L-methionine is bound by residues T60, D81, and 106 to 107 (DA).

It belongs to the class I-like SAM-binding methyltransferase superfamily. MenG/UbiE family.

It carries out the reaction a 2-demethylmenaquinol + S-adenosyl-L-methionine = a menaquinol + S-adenosyl-L-homocysteine + H(+). Its pathway is quinol/quinone metabolism; menaquinone biosynthesis; menaquinol from 1,4-dihydroxy-2-naphthoate: step 2/2. In terms of biological role, methyltransferase required for the conversion of demethylmenaquinol (DMKH2) to menaquinol (MKH2). The chain is Demethylmenaquinone methyltransferase from Staphylococcus carnosus (strain TM300).